The following is a 180-amino-acid chain: Photosystem II extrinsic protein V (180 aa).

A signal peptide spans 1–40 (MFSKAFSFQKVFAPARRRLLVLLLAALMAGFGWGLAPVFA). Residues C73, C76, H77, and H128 each coordinate heme c.

Belongs to the cytochrome c family. PsbV subfamily. In terms of assembly, PSII is composed of 1 copy each of membrane proteins PsbA, PsbB, PsbC, PsbD, PsbE, PsbF, PsbH, PsbI, PsbJ, PsbK, PsbL, PsbM, PsbT, PsbX, PsbY, PsbZ, Psb30/Ycf12, peripheral proteins PsbO, CyanoQ (PsbQ), PsbU, PsbV and a large number of cofactors. It forms dimeric complexes. Heme c serves as cofactor.

The protein localises to the cellular thylakoid membrane. One of the extrinsic, lumenal subunits of photosystem II (PSII). PSII is a light-driven water plastoquinone oxidoreductase, using light energy to abstract electrons from H(2)O, generating a proton gradient subsequently used for ATP formation. The extrinsic proteins stabilize the structure of photosystem II oxygen-evolving complex (OEC), the ion environment of oxygen evolution and protect the OEC against heat-induced inactivation. Low-potential cytochrome c that plays a role in the OEC of PSII. The sequence is that of Photosystem II extrinsic protein V from Synechococcus sp. (strain JA-2-3B'a(2-13)) (Cyanobacteria bacterium Yellowstone B-Prime).